Consider the following 125-residue polypeptide: Cysteine proteinase inhibitor 3 (125 aa).

The signal sequence occupies residues 1–22; the sequence is MESKTFWIVTLLLCGTIQLAIC. Residues 36–124 enclose the Cystatin domain; sequence GGVHDLRGNQ…KQLQEFKESS (89 aa). The short motif at 80-84 is the Secondary area of contact element; it reads QVVAG.

Belongs to the cystatin family. Phytocystatin subfamily.

Its subcellular location is the secreted. In terms of biological role, specific inhibitor of cysteine proteinases. Probably involved in the regulation of endogenous processes and in defense against pests and pathogens. The chain is Cysteine proteinase inhibitor 3 (CYS3) from Arabidopsis thaliana (Mouse-ear cress).